A 420-amino-acid chain; its full sequence is MGPLLVWHRGDLRLHDHPALLEALARGPVVGLVVLDPNNLKTTPRRRAWFLENVRALREAYRARGGALWVLEGLPWEKVPEAARRLKAKAVYALTSYTPYGRYRDAKVQEALPVPLHLLPAPHLLPPDLPRAYRVYTPFARRFLGVEAPLPAPEALPKGPEEGEIPREDPGLPLPEPGEEAALAGLRAFLEAKLPRYAEERDRLDGEGGSRLSPYFALGVLSPRLAAWEAERRGGEGARKWVAELLWRDFSYHLLYHFPWMAERPLDPRFQALPWQEDEALFRAWYEGRTGVPLVDAAMRELHATGFLSNRARMNAAQFAVKHLLLPWKRCEEAFRHLLLDGDRAVNLQGWQWAGGLGVDAAPYFRVFNPVLQGERHDPEGRWLKRWAPEYPSYAPKDPVVDLEEARRRYLRLARDLARG.

The region spanning 2–124 (GPLLVWHRGD…PLHLLPAPHL (123 aa)) is the Photolyase/cryptochrome alpha/beta domain. The segment at 152-175 (APEALPKGPEEGEIPREDPGLPLP) is disordered. The span at 159–170 (GPEEGEIPREDP) shows a compositional bias: basic and acidic residues. Tyr197 serves as a coordination point for FAD. Arg201 contacts DNA. Position 209–213 (209–213 (GSRLS)) interacts with FAD. 2 interaction with DNA regions span residues 244–251 (ELLWRDFS) and 310–311 (NR). 341–343 (DGD) contacts FAD. Residue Gln373 participates in DNA binding.

The protein belongs to the DNA photolyase class-1 family. As to quaternary structure, monomer. FAD serves as cofactor.

It catalyses the reaction cyclobutadipyrimidine (in DNA) = 2 pyrimidine residues (in DNA).. In terms of biological role, involved in repair of UV radiation-induced DNA damage. Catalyzes the light-dependent monomerization (300-600 nm) of cyclobutyl pyrimidine dimers (in cis-syn configuration), which are formed between adjacent bases on the same DNA strand upon exposure to ultraviolet radiation. This chain is Deoxyribodipyrimidine photo-lyase (phr), found in Thermus thermophilus (strain ATCC BAA-163 / DSM 7039 / HB27).